Here is a 313-residue protein sequence, read N- to C-terminus: Chemotaxis protein CheV2 (313 aa).

In terms of domain architecture, CheW-like spans 16-172 (EAQFLCFRLD…VEKMISDVFP (157 aa)). One can recognise a Response regulatory domain in the interval 193–313 (LILIAEDSLS…IHEMLKKTLS (121 aa)). The residue at position 246 (D246) is a 4-aspartylphosphate.

Post-translationally, phosphorylated; probably by transfer of CheAY phosphate group.

Plays a role in chemotaxis signal transduction system in order to colonize the host stomach. May act as a phosphate sink to control the flow of phosphate to CheAY. The polypeptide is Chemotaxis protein CheV2 (Helicobacter pylori (strain ATCC 700392 / 26695) (Campylobacter pylori)).